A 198-amino-acid chain; its full sequence is Endonuclease V (198 aa).

Residues Asp38 and Asp101 each coordinate Mg(2+).

Belongs to the endonuclease V family. Mg(2+) is required as a cofactor.

It localises to the cytoplasm. The catalysed reaction is Endonucleolytic cleavage at apurinic or apyrimidinic sites to products with a 5'-phosphate.. Its function is as follows. DNA repair enzyme involved in the repair of deaminated bases. Selectively cleaves double-stranded DNA at the second phosphodiester bond 3' to a deoxyinosine leaving behind the intact lesion on the nicked DNA. This chain is Endonuclease V, found in Saccharolobus islandicus (strain M.14.25 / Kamchatka #1) (Sulfolobus islandicus).